A 99-amino-acid polypeptide reads, in one-letter code: SAGA-associated factor 11 (99 aa).

Residues 71 to 92 form an SGF11-type zinc finger; sequence FYCENCGREVSGNRFAAHLQRC.

Belongs to the SGF11 family. Component of the 1.8 MDa SAGA transcription coactivator-HAT complex. SAGA is built of 5 distinct domains with specialized functions. Within the SAGA complex, SUS1, SGF11, SGF73 and UBP8 form an additional subcomplex of SAGA called the DUB module (deubiquitination module). Interacts directly with SGF73, SUS1 and UBP8.

The protein resides in the nucleus. Functions as a component of the transcription regulatory histone acetylation (HAT) complex SAGA. At the promoters, SAGA is required for recruitment of the basal transcription machinery. It influences RNA polymerase II transcriptional activity through different activities such as TBP interaction and promoter selectivity, interaction with transcription activators, and chromatin modification through histone acetylation and deubiquitination. SAGA acetylates nucleosomal histone H3 to some extent (to form H3K9ac, H3K14ac, H3K18ac and H3K23ac). SAGA interacts with DNA via upstream activating sequences (UASs). Involved in transcriptional regulation of a subset of SAGA-regulated genes. Within the SAGA complex, participates in a subcomplex, that specifically deubiquitinates histones H2B. In Candida glabrata (strain ATCC 2001 / BCRC 20586 / JCM 3761 / NBRC 0622 / NRRL Y-65 / CBS 138) (Yeast), this protein is SAGA-associated factor 11.